Consider the following 449-residue polypeptide: UNC93-like protein MFSD11 (449 aa).

Residues leucine 8–cysteine 28 traverse the membrane as a helical segment. A glycan (N-linked (GlcNAc...) asparagine) is linked at asparagine 40. Helical transmembrane passes span alanine 53–valine 73, glycine 74–asparagine 94, proline 96–tryptophan 116, isoleucine 138–tryptophan 158, and arginine 170–isoleucine 190. Phosphoserine is present on serine 204. Transmembrane regions (helical) follow at residues methionine 239 to valine 259, leucine 277 to glycine 297, proline 309 to methionine 329, phenylalanine 359 to leucine 379, alanine 385 to tyrosine 405, and leucine 410 to phenylalanine 430.

It belongs to the unc-93 family.

Its subcellular location is the membrane. This chain is UNC93-like protein MFSD11 (MFSD11), found in Pongo abelii (Sumatran orangutan).